A 177-amino-acid polypeptide reads, in one-letter code: Adenine phosphoribosyltransferase (177 aa).

This sequence belongs to the purine/pyrimidine phosphoribosyltransferase family. As to quaternary structure, homodimer.

Its subcellular location is the cytoplasm. The catalysed reaction is AMP + diphosphate = 5-phospho-alpha-D-ribose 1-diphosphate + adenine. It participates in purine metabolism; AMP biosynthesis via salvage pathway; AMP from adenine: step 1/1. Functionally, catalyzes a salvage reaction resulting in the formation of AMP, that is energically less costly than de novo synthesis. In Acidothermus cellulolyticus (strain ATCC 43068 / DSM 8971 / 11B), this protein is Adenine phosphoribosyltransferase.